Consider the following 122-residue polypeptide: Large ribosomal subunit protein uL14 (122 aa).

This sequence belongs to the universal ribosomal protein uL14 family. Part of the 50S ribosomal subunit. Forms a cluster with proteins L3 and L19. In the 70S ribosome, L14 and L19 interact and together make contacts with the 16S rRNA in bridges B5 and B8.

Binds to 23S rRNA. Forms part of two intersubunit bridges in the 70S ribosome. This is Large ribosomal subunit protein uL14 from Variovorax paradoxus (strain S110).